A 788-amino-acid chain; its full sequence is IQ motif and ubiquitin-like domain-containing protein (788 aa).

Residues 1-89 (MSDPEEERVA…SLGSASGSQD (89 aa)) are disordered. Basic and acidic residues predominate over residues 7 to 20 (ERVADSTAHYEEAG). The span at 31–54 (EAEGSDVMPEQDDEVQELTTESEE) shows a compositional bias: acidic residues. Basic and acidic residues predominate over residues 68 to 78 (KSDDSKPREEV). Over residues 80-89 (SLGSASGSQD) the composition is skewed to polar residues. The 77-residue stretch at 127 to 203 (ATVKIVLIPA…VQVEVFSTLP (77 aa)) folds into the Ubiquitin-like domain. Residues 334-363 (RLHAVIVIQTSYRRWHAKRYVESLRKQKKL) enclose the IQ domain.

As to quaternary structure, component of the axonemal radial spoke 1 (RS1) complex, at least composed of spoke head proteins RSPH1, RSPH3B, RSPH9 and the cilia-specific component RSPH4A or sperm-specific component RSPH6A, spoke stalk proteins RSPH14, DNAJB13, DYDC1, ROPN1L and NME5, and the anchor protein IQUB. Does not appear to be part of radial spoke complexes 2 or 3 (RS2 or RS3). Interacts with CALM1. Interacts with DNAJB13. Interacts with DYNLL2. Interacts with NME5. Interacts with RSPH3. Interacts with RSPH9. Interacts with ZMYND10. Interacts with calmodulin; the interaction occurs in conditions of low but not high calcium. Expressed in the flagellum of sperm cells and cilia of tracheal epithelial cells (at protein level). High expression in testis, also present in brain and lung.

It localises to the cytoplasm. It is found in the cytoskeleton. The protein resides in the flagellum axoneme. The protein localises to the cell projection. Its subcellular location is the cilium. Anchors the radial spoke 1 (RS1) complex to the A microtubule of outer doublet microtubules in axonemes. The triple radial spokes (RS1, RS2 and RS3) are required to modulate beating of the sperm flagellum. May play a role in inhibiting signaling via MAPK1/ERK2 and MAPK3/ERK1. Additionally, may play a role in the functioning of cilia. Not required for the functioning of tracheal or ependymal cilia. The sequence is that of IQ motif and ubiquitin-like domain-containing protein (Iqub) from Mus musculus (Mouse).